The chain runs to 100 residues: Urease subunit gamma (100 aa).

Belongs to the urease gamma subunit family. In terms of assembly, heterotrimer of UreA (gamma), UreB (beta) and UreC (alpha) subunits. Three heterotrimers associate to form the active enzyme.

It localises to the cytoplasm. It carries out the reaction urea + 2 H2O + H(+) = hydrogencarbonate + 2 NH4(+). Its pathway is nitrogen metabolism; urea degradation; CO(2) and NH(3) from urea (urease route): step 1/1. In Mycobacterium sp. (strain JLS), this protein is Urease subunit gamma.